The primary structure comprises 251 residues: Flap endonuclease Xni (251 aa).

Residue Asp-104 coordinates Mg(2+). Residues 160–249 (VQPQQLPDYW…IDGNLQQLRL (90 aa)) form the 5'-3' exonuclease domain. K(+) contacts are provided by Leu-171, Ala-172, Pro-180, Val-182, and Ile-185. The interaction with DNA stretch occupies residues 184–189 (GIGPKS).

Belongs to the Xni family. Mg(2+) is required as a cofactor. It depends on K(+) as a cofactor.

Has flap endonuclease activity. During DNA replication, flap endonucleases cleave the 5'-overhanging flap structure that is generated by displacement synthesis when DNA polymerase encounters the 5'-end of a downstream Okazaki fragment. This chain is Flap endonuclease Xni, found in Escherichia coli O6:K15:H31 (strain 536 / UPEC).